The chain runs to 889 residues: DNA-directed RNA polymerase subunit Rpo1N (889 aa).

Zn(2+) contacts are provided by cysteine 62, cysteine 65, cysteine 72, histidine 75, cysteine 102, cysteine 105, cysteine 149, and cysteine 152. Residues aspartate 466, aspartate 468, and aspartate 470 each coordinate Mg(2+).

Belongs to the RNA polymerase beta' chain family. As to quaternary structure, part of the RNA polymerase complex. Mg(2+) is required as a cofactor. Requires Zn(2+) as cofactor.

The protein resides in the cytoplasm. The catalysed reaction is RNA(n) + a ribonucleoside 5'-triphosphate = RNA(n+1) + diphosphate. DNA-dependent RNA polymerase (RNAP) catalyzes the transcription of DNA into RNA using the four ribonucleoside triphosphates as substrates. Forms the clamp head domain. This chain is DNA-directed RNA polymerase subunit Rpo1N, found in Methanococcus vannielii (strain ATCC 35089 / DSM 1224 / JCM 13029 / OCM 148 / SB).